Here is a 449-residue protein sequence, read N- to C-terminus: GTPase Der (449 aa).

EngA-type G domains follow at residues 2-169 and 180-355; these read FTVA…QLPP and VRFC…EQLT. GTP contacts are provided by residues 8–15, 55–59, 118–121, 186–193, 233–237, and 298–301; these read GRPNVGKS, DTGGL, NKSE, GKPNVGKS, DTAGI, and NKWD. The KH-like domain maps to 356–440; that stretch reads KKISTSLLND…PITLYFKSKN (85 aa).

The protein belongs to the TRAFAC class TrmE-Era-EngA-EngB-Septin-like GTPase superfamily. EngA (Der) GTPase family. As to quaternary structure, associates with the 50S ribosomal subunit.

GTPase that plays an essential role in the late steps of ribosome biogenesis. In Mycoplasma pneumoniae (strain ATCC 29342 / M129 / Subtype 1) (Mycoplasmoides pneumoniae), this protein is GTPase Der.